Reading from the N-terminus, the 418-residue chain is Staphyloferrin B transporter (418 aa).

Transmembrane regions (helical) follow at residues 19–39, 49–69, 88–108, 163–183, 222–242, 257–277, 287–307, 317–337, 353–373, and 377–397; these read FIAIAGLTVLVPLLPIYMASL, LWSGIAIAAPAVTTMIASPIW, GLAVCLFLMALCTTPLQFVLV, ILGFSALLMSIAVITFIVCIF, FIIVGVLANFAMYGMLTALSP, VIGFLQSAFWTASILSAPLWG, SVYIFATIACGCSAILQGLAT, ILQGLTYSALIQSVMFVVVNA, MLVVGQIIGSLSGAAITSYTT, and TFIVMGVVFAVSSLFLICSTI.

The protein belongs to the major facilitator superfamily.

The protein resides in the cell membrane. Its function is as follows. Involved in staphyloferrin B secretion. The polypeptide is Staphyloferrin B transporter (Staphylococcus aureus (strain NCTC 8325 / PS 47)).